Here is a 277-residue protein sequence, read N- to C-terminus: 3-methyl-2-oxobutanoate hydroxymethyltransferase (277 aa).

Residues Asp-43 and Asp-82 each coordinate Mg(2+). Residues 43–44 (DS), Asp-82, and Lys-112 contribute to the 3-methyl-2-oxobutanoate site. Glu-114 is a binding site for Mg(2+). Glu-181 serves as the catalytic Proton acceptor.

It belongs to the PanB family. As to quaternary structure, homodecamer; pentamer of dimers. It depends on Mg(2+) as a cofactor.

The protein resides in the cytoplasm. The catalysed reaction is 3-methyl-2-oxobutanoate + (6R)-5,10-methylene-5,6,7,8-tetrahydrofolate + H2O = 2-dehydropantoate + (6S)-5,6,7,8-tetrahydrofolate. It participates in cofactor biosynthesis; (R)-pantothenate biosynthesis; (R)-pantoate from 3-methyl-2-oxobutanoate: step 1/2. Its function is as follows. Catalyzes the reversible reaction in which hydroxymethyl group from 5,10-methylenetetrahydrofolate is transferred onto alpha-ketoisovalerate to form ketopantoate. The protein is 3-methyl-2-oxobutanoate hydroxymethyltransferase of Listeria innocua serovar 6a (strain ATCC BAA-680 / CLIP 11262).